The chain runs to 306 residues: Curved DNA-binding protein (306 aa).

The J domain occupies 5-69; the sequence is DYYAIMGVKP…QRRAEYDQLW (65 aa).

It is found in the cytoplasm. Its subcellular location is the nucleoid. In terms of biological role, DNA-binding protein that preferentially recognizes a curved DNA sequence. It is probably a functional analog of DnaJ; displays overlapping activities with DnaJ, but functions under different conditions, probably acting as a molecular chaperone in an adaptive response to environmental stresses other than heat shock. Lacks autonomous chaperone activity; binds native substrates and targets them for recognition by DnaK. Its activity is inhibited by the binding of CbpM. In Salmonella choleraesuis (strain SC-B67), this protein is Curved DNA-binding protein.